The chain runs to 67 residues: ATP synthase F(0) complex subunit 8 (67 aa).

The chain crosses the membrane as a helical span at residues 8–24 (TWLIMILSMILTLFITF). Residue Lys54 is modified to N6-acetyllysine; alternate. Position 54 is an N6-succinyllysine; alternate (Lys54). Position 57 is an N6-acetyllysine (Lys57).

The protein belongs to the ATPase protein 8 family. Component of the ATP synthase complex composed at least of ATP5F1A/subunit alpha, ATP5F1B/subunit beta, ATP5MC1/subunit c (homooctomer), MT-ATP6/subunit a, MT-ATP8/subunit 8, ATP5ME/subunit e, ATP5MF/subunit f, ATP5MG/subunit g, ATP5MK/subunit k, ATP5MJ/subunit j, ATP5F1C/subunit gamma, ATP5F1D/subunit delta, ATP5F1E/subunit epsilon, ATP5PF/subunit F6, ATP5PB/subunit b, ATP5PD/subunit d, ATP5PO/subunit OSCP. ATP synthase complex consists of a soluble F(1) head domain (subunits alpha(3) and beta(3)) - the catalytic core - and a membrane F(0) domain - the membrane proton channel (subunits c, a, 8, e, f, g, k and j). These two domains are linked by a central stalk (subunits gamma, delta, and epsilon) rotating inside the F1 region and a stationary peripheral stalk (subunits F6, b, d, and OSCP). Interacts with PRICKLE3.

It is found in the mitochondrion membrane. Subunit 8, of the mitochondrial membrane ATP synthase complex (F(1)F(0) ATP synthase or Complex V) that produces ATP from ADP in the presence of a proton gradient across the membrane which is generated by electron transport complexes of the respiratory chain. ATP synthase complex consist of a soluble F(1) head domain - the catalytic core - and a membrane F(1) domain - the membrane proton channel. These two domains are linked by a central stalk rotating inside the F(1) region and a stationary peripheral stalk. During catalysis, ATP synthesis in the catalytic domain of F(1) is coupled via a rotary mechanism of the central stalk subunits to proton translocation. In vivo, can only synthesize ATP although its ATP hydrolase activity can be activated artificially in vitro. Part of the complex F(0) domain. This Phoca vitulina (Harbor seal) protein is ATP synthase F(0) complex subunit 8.